Here is an 884-residue protein sequence, read N- to C-terminus: Androgen receptor (884 aa).

The modulating stretch occupies residues 1–522 (MEVQLGLGRV…PIDYYFPPQK (522 aa)). Residues 1–551 (MEVQLGLGRV…GSCKVFFKRA (551 aa)) are interaction with ZNF318. 2 disordered regions span residues 33–145 (VIQN…TLSL) and 174–207 (QQQQ…YLGG). Composition is skewed to low complexity over residues 55–79 (QQQQ…PQAQ) and 174–196 (QQQQ…AAGA). Serine 61 carries the phosphoserine; by CDK9 modification. At serine 75 the chain carries Phosphoserine. The segment covering 197–207 (PTSSKDSYLGG) has biased composition (polar residues). Tyrosine 204 is modified (phosphotyrosine; by CSK). Serine 237 is subject to Phosphoserine. Tyrosine 248 bears the Phosphotyrosine; by CSK and TNK2 mark. The disordered stretch occupies residues 275-294 (DDSADKGTEEPAEYTPFKGS). Residues tyrosine 288, tyrosine 327, tyrosine 338, and tyrosine 343 each carry the phosphotyrosine; by CSK modification. At tyrosine 344 the chain carries Phosphotyrosine; by CSK and TNK2. Lysine 367 is covalently cross-linked (Glycyl lysine isopeptide (Lys-Gly) (interchain with G-Cter in SUMO)). Tyrosine 374 is subject to Phosphotyrosine; by CSK. Lysine 485 participates in a covalent cross-link: Glycyl lysine isopeptide (Lys-Gly) (interchain with G-Cter in SUMO). Phosphotyrosine; by CSK is present on residues tyrosine 499 and tyrosine 516. The segment at 516 to 883 (YYFPPQKTCL…GKVKPIYFHT (368 aa)) is interaction with LPXN. A DNA-binding region (nuclear receptor) is located at residues 523-596 (TCLICGDEAS…AGMTLGARKL (74 aa)). 2 NR C4-type zinc fingers span residues 524–544 (CLIC…CGSC) and 560–584 (CASR…LRKC). Positions 536–626 (YGALTCGSCK…TEESSQKLTV (91 aa)) are interaction with HIPK3. Residues 556-883 (QKYLCASRND…GKVKPIYFHT (328 aa)) form an interaction with CCAR1 region. The segment at 589–883 (MTLGARKLKK…GKVKPIYFHT (295 aa)) is interaction with KAT7. Residue serine 615 is modified to Phosphoserine; by STK4/MST1. The 232-residue stretch at 633 to 864 (ECQPIFLNVL…DFPEMMAEII (232 aa)) folds into the NR LBD domain. 2 residues coordinate 17beta-hydroxy-5alpha-androstan-3-one: asparagine 670 and arginine 717. Residues lysine 810 and lysine 812 each participate in a glycyl lysine isopeptide (Lys-Gly) (interchain with G-Cter in ubiquitin) cross-link. Residue threonine 842 participates in 17beta-hydroxy-5alpha-androstan-3-one binding. A Phosphotyrosine; by CSK modification is found at tyrosine 880.

This sequence belongs to the nuclear hormone receptor family. NR3 subfamily. Binds DNA as a homodimer. Part of a ternary complex containing AR, EFCAB6/DJBP and PARK7. Interacts with HIPK3 and NR0B2 in the presence of androgen. The ligand binding domain interacts with KAT7/HBO1 in the presence of dihydrotestosterone. Interacts with EFCAB6/DJBP, PQBP1, RANBP9, RBAK, SPDEF, SRA1, TGFB1I1 and RREB1. Interacts with ZMIZ1/ZIMP10 and ZMIZ2/ZMIP7 which both enhance its transactivation activity. Interacts with SLC30A9 and RAD54L2/ARIP4. Interacts with MACROD1 (via macro domain). Interacts via the ligand-binding domain with LXXLL and FXXLF motifs from NCOA1, NCOA2, NCOA3 and MAGEA11. Interacts (via nuclear receptor DNA binding domain and nuclear receptor ligand binding domain) with NCOA4. The AR N-terminal poly-Gln region binds Ran resulting in enhancement of AR-mediated transactivation. Ran-binding decreases as the poly-Gln length increases. Interacts with HIP1 (via coiled coil domain). Interacts (via ligand-binding domain) with TRIM68. Interacts with TNK2. Interacts with USP26. Interacts with RNF6. Interacts (regulated by RNF6 probably through polyubiquitination) with RNF14; regulates AR transcriptional activity. Interacts with PRMT2 and TRIM24. Interacts with RACK1. Interacts with RANBP10; this interaction enhances dihydrotestosterone-induced AR transcriptional activity. Interacts with PRPF6 in a hormone-independent way; this interaction enhances dihydrotestosterone-induced AR transcriptional activity. Interacts with STK4/MST1. Interacts with ZIPK/DAPK3. Interacts with LPXN. Interacts with MAK. Part of a complex containing AR, MAK and NCOA3. Interacts with CRY1. Interacts with CCAR1 and GATA2. Interacts with ZNF318. Interacts with BUD31. Interacts with ARID4A. Interacts with ARID4B. Interacts (via NR LBD domain) with ZBTB7A; the interaction is direct and androgen-dependent. Interacts with NCOR1. Interacts with NCOR2. Interacts with CRY2 in a ligand-dependent manner. Phosphorylated in prostate cancer cells in response to several growth factors including EGF. Phosphorylation is induced by c-Src kinase (CSK). Tyr-499 is one of the major phosphorylation sites and an increase in phosphorylation and Src kinase activity is associated with prostate cancer progression. Phosphorylation by TNK2 enhances the DNA-binding and transcriptional activity. Phosphorylation at Ser-61 by CDK9 regulates AR promoter selectivity and cell growth. Post-translationally, sumoylated on Lys-367 (major) and Lys-485. Ubiquitinated. Deubiquitinated by USP26. 'Lys-6' and 'Lys-27'-linked polyubiquitination by RNF6 modulates AR transcriptional activity and specificity. In terms of processing, palmitoylated by ZDHHC7 and ZDHHC21. Palmitoylation is required for plasma membrane targeting and for rapid intracellular signaling via ERK and AKT kinases and cAMP generation.

Its subcellular location is the nucleus. It is found in the cytoplasm. In terms of biological role, steroid hormone receptors are ligand-activated transcription factors that regulate eukaryotic gene expression and affect cellular proliferation and differentiation in target tissues. Transcription factor activity is modulated by bound coactivator and corepressor proteins like ZBTB7A that recruits NCOR1 and NCOR2 to the androgen response elements/ARE on target genes, negatively regulating androgen receptor signaling and androgen-induced cell proliferation. Transcription activation is also down-regulated by NR0B2. Activated, but not phosphorylated, by HIPK3 and ZIPK/DAPK3. The chain is Androgen receptor (AR) from Eulemur fulvus collaris (Collared brown lemur).